The sequence spans 495 residues: Lysine--tRNA ligase (495 aa).

Positions 406 and 413 each coordinate Mg(2+).

The protein belongs to the class-II aminoacyl-tRNA synthetase family. As to quaternary structure, homodimer. Requires Mg(2+) as cofactor.

Its subcellular location is the cytoplasm. It carries out the reaction tRNA(Lys) + L-lysine + ATP = L-lysyl-tRNA(Lys) + AMP + diphosphate. This chain is Lysine--tRNA ligase, found in Leuconostoc mesenteroides subsp. mesenteroides (strain ATCC 8293 / DSM 20343 / BCRC 11652 / CCM 1803 / JCM 6124 / NCDO 523 / NBRC 100496 / NCIMB 8023 / NCTC 12954 / NRRL B-1118 / 37Y).